The sequence spans 365 residues: Protein RecA (365 aa).

81–88 (GPESSGKT) is a binding site for ATP.

The protein belongs to the RecA family.

It is found in the cytoplasm. Can catalyze the hydrolysis of ATP in the presence of single-stranded DNA, the ATP-dependent uptake of single-stranded DNA by duplex DNA, and the ATP-dependent hybridization of homologous single-stranded DNAs. It interacts with LexA causing its activation and leading to its autocatalytic cleavage. In Borreliella burgdorferi (strain ATCC 35210 / DSM 4680 / CIP 102532 / B31) (Borrelia burgdorferi), this protein is Protein RecA.